The primary structure comprises 255 residues: Triosephosphate isomerase (255 aa).

9-11 (NWK) lines the substrate pocket. H95 serves as the catalytic Electrophile. The active-site Proton acceptor is E167. Residues G173, S212, and 233-234 (GG) contribute to the substrate site.

This sequence belongs to the triosephosphate isomerase family. Homodimer.

The protein localises to the cytoplasm. It carries out the reaction D-glyceraldehyde 3-phosphate = dihydroxyacetone phosphate. It functions in the pathway carbohydrate biosynthesis; gluconeogenesis. Its pathway is carbohydrate degradation; glycolysis; D-glyceraldehyde 3-phosphate from glycerone phosphate: step 1/1. In terms of biological role, involved in the gluconeogenesis. Catalyzes stereospecifically the conversion of dihydroxyacetone phosphate (DHAP) to D-glyceraldehyde-3-phosphate (G3P). The chain is Triosephosphate isomerase from Serratia proteamaculans (strain 568).